Reading from the N-terminus, the 251-residue chain is MKIFYKAINMTLSMFTVIPSPKYEWDDRAAKHIMKLYPFIGLIIGALWYLSFFVLSKLNVPIMLMAALILTVPYILTGFLHLDGFMDVSDALLSRRDKETKLRILKDSTVGAFSVISVVLLLLVEFAGMFTVLNKNLDMRVLIFIPIASRAINGYFIVSQEMLGQSSLAKFFKEGTGKVDEIILLGIYVLVALITFFTLGINYLIAILAMGLISFILLLKVKKELGGINGDVAGYILVLMEFTGILLLGII.

A run of 7 helical transmembrane segments spans residues 36 to 56 (LYPFIGLIIGALWYLSFFVLS), 60 to 80 (VPIMLMAALILTVPYILTGFL), 110 to 130 (VGAFSVISVVLLLLVEFAGMF), 141 to 161 (VLIFIPIASRAINGYFIVSQE), 181 to 201 (EIILLGIYVLVALITFFTLGI), 202 to 222 (NYLIAILAMGLISFILLLKVK), and 231 to 251 (DVAGYILVLMEFTGILLLGII).

The protein belongs to the CobS family. Mg(2+) serves as cofactor.

It is found in the cell membrane. The catalysed reaction is alpha-ribazole + adenosylcob(III)inamide-GDP = adenosylcob(III)alamin + GMP + H(+). It carries out the reaction alpha-ribazole 5'-phosphate + adenosylcob(III)inamide-GDP = adenosylcob(III)alamin 5'-phosphate + GMP + H(+). It functions in the pathway cofactor biosynthesis; adenosylcobalamin biosynthesis; adenosylcobalamin from cob(II)yrinate a,c-diamide: step 7/7. Functionally, joins adenosylcobinamide-GDP and alpha-ribazole to generate adenosylcobalamin (Ado-cobalamin). Also synthesizes adenosylcobalamin 5'-phosphate from adenosylcobinamide-GDP and alpha-ribazole 5'-phosphate. This is Adenosylcobinamide-GDP ribazoletransferase from Clostridium perfringens (strain 13 / Type A).